Reading from the N-terminus, the 757-residue chain is Amine oxidase [copper-containing] 2 (757 aa).

The Cytoplasmic portion of the chain corresponds to 1-4 (MNLK). Residues 5 to 25 (VLLLLLGLSFLTVFALVYVLL) form a helical membrane-spanning segment. The Extracellular portion of the chain corresponds to 26 to 757 (TRQGSFSQSP…NLPSFSYEGL (732 aa)). N-linked (GlcNAc...) asparagine glycans are attached at residues N133, N198, and N226. The Proton acceptor role is filled by D381. An intrachain disulfide couples C399 to C425. The active-site Schiff-base intermediate with substrate; via topaquinone is the Y466. The residue at position 466 (Y466) is a 2',4',5'-topaquinone. The Cu(2+) site is built by H517 and H519. The Ca(2+) site is built by D526, L527, D528, E569, E638, F660, and N662. The N-linked (GlcNAc...) asparagine glycan is linked to N663. Ca(2+) contacts are provided by E664, D670, and L671. H681 is a Cu(2+) binding site. C731 and C738 are disulfide-bonded.

It belongs to the copper/topaquinone oxidase family. Homodimer; disulfide-linked. Probably forms heterodimers with AOC3. Requires Cu(2+) as cofactor. The cofactor is Ca(2+). It depends on L-topaquinone as a cofactor. In terms of processing, topaquinone (TPQ) is generated by copper-dependent autoxidation of a specific tyrosyl residue. Significantly much highly expressed in retina.

It localises to the cell membrane. The catalysed reaction is 2-phenylethylamine + O2 + H2O = 2-phenylacetaldehyde + H2O2 + NH4(+). It catalyses the reaction tryptamine + O2 + H2O = indole-3-acetaldehyde + H2O2 + NH4(+). It carries out the reaction tyramine + O2 + H2O = (4-hydroxyphenyl)acetaldehyde + H2O2 + NH4(+). Functionally, catalyzes the oxidative deamination of primary amines to the corresponding aldehydes with the concomitant production of hydrogen peroxide and ammonia. Has a preference for 2-phenylethylamine, tryptamine and tyramine. Could also act on methylamine and benzylamine but much less efficiently. In Mus musculus (Mouse), this protein is Amine oxidase [copper-containing] 2.